The sequence spans 229 residues: Protein GrpE (229 aa).

Disordered regions lie at residues 1–49 and 207–229; these read MTEG…SANS and DSTA…EDGD. Over residues 13–24 the composition is skewed to basic and acidic residues; it reads TDKRRIDPDTGE.

The protein belongs to the GrpE family. As to quaternary structure, homodimer.

The protein localises to the cytoplasm. Its function is as follows. Participates actively in the response to hyperosmotic and heat shock by preventing the aggregation of stress-denatured proteins, in association with DnaK and GrpE. It is the nucleotide exchange factor for DnaK and may function as a thermosensor. Unfolded proteins bind initially to DnaJ; upon interaction with the DnaJ-bound protein, DnaK hydrolyzes its bound ATP, resulting in the formation of a stable complex. GrpE releases ADP from DnaK; ATP binding to DnaK triggers the release of the substrate protein, thus completing the reaction cycle. Several rounds of ATP-dependent interactions between DnaJ, DnaK and GrpE are required for fully efficient folding. The chain is Protein GrpE from Mycobacterium leprae (strain TN).